A 100-amino-acid chain; its full sequence is Defensin-like protein 316 (100 aa).

A signal peptide spans 1–18 (MASHIICYIFCIIKLSCA). Disulfide bonds link cysteine 21–cysteine 84, cysteine 43–cysteine 64, and cysteine 53–cysteine 76.

This sequence belongs to the DEFL family.

The protein resides in the secreted. The chain is Defensin-like protein 316 from Arabidopsis thaliana (Mouse-ear cress).